Consider the following 725-residue polypeptide: Glutamine-dependent NAD(+) synthetase (725 aa).

The CN hydrolase domain occupies 4 to 274 (LKVATCNLNQ…VEVIISQVDL (271 aa)). The active-site Proton acceptor; for glutaminase activity is the E44. K113 (for glutaminase activity) is an active-site residue. C174 serves as the catalytic Nucleophile; for glutaminase activity. The tract at residues 324-709 (YHSPQEEIAF…FPEEEANSNK (386 aa)) is ligase. 354-361 (PLSGGADS) is an ATP binding site. Residue S356 is part of the active site.

In the C-terminal section; belongs to the NAD synthetase family.

It catalyses the reaction deamido-NAD(+) + L-glutamine + ATP + H2O = L-glutamate + AMP + diphosphate + NAD(+) + H(+). It functions in the pathway cofactor biosynthesis; NAD(+) biosynthesis; NAD(+) from deamido-NAD(+) (L-Gln route): step 1/1. The sequence is that of Glutamine-dependent NAD(+) synthetase from Arabidopsis thaliana (Mouse-ear cress).